A 150-amino-acid polypeptide reads, in one-letter code: Nucleoside diphosphate kinase (150 aa).

Residues K9, F57, R85, T91, R102, and N112 each contribute to the ATP site. Catalysis depends on H115, which acts as the Pros-phosphohistidine intermediate.

It belongs to the NDK family. In terms of assembly, homotetramer. It depends on Mg(2+) as a cofactor.

It is found in the cytoplasm. The catalysed reaction is a 2'-deoxyribonucleoside 5'-diphosphate + ATP = a 2'-deoxyribonucleoside 5'-triphosphate + ADP. The enzyme catalyses a ribonucleoside 5'-diphosphate + ATP = a ribonucleoside 5'-triphosphate + ADP. Functionally, major role in the synthesis of nucleoside triphosphates other than ATP. The ATP gamma phosphate is transferred to the NDP beta phosphate via a ping-pong mechanism, using a phosphorylated active-site intermediate. This is Nucleoside diphosphate kinase from Thermosynechococcus vestitus (strain NIES-2133 / IAM M-273 / BP-1).